We begin with the raw amino-acid sequence, 101 residues long: MAKVSSIQKNKSRQKKSQSLHNKRSELKSKIYDKSLSLEQRFPLIIALAQLPRNSSSTRIRNRCELTGRPRGVIRKFGISRNKLRELIGRGLVPGVVKASW.

A disordered region spans residues 1 to 26 (MAKVSSIQKNKSRQKKSQSLHNKRSE). A compositionally biased stretch (basic residues) spans 10-22 (NKSRQKKSQSLHN).

It belongs to the universal ribosomal protein uS14 family. Part of the 30S ribosomal subunit. Contacts proteins S3 and S10.

Functionally, binds 16S rRNA, required for the assembly of 30S particles and may also be responsible for determining the conformation of the 16S rRNA at the A site. This is Small ribosomal subunit protein uS14 from Rickettsia prowazekii (strain Madrid E).